Here is a 462-residue protein sequence, read N- to C-terminus: NEDD8-activating enzyme E1 catalytic subunit (462 aa).

Residue Ala-2 is modified to N-acetylalanine. The segment at His-53–Cys-70 is interaction with UBE2M N-terminus. Residues Asp-100 to Lys-124 and Ile-148 to Ala-171 contribute to the ATP site. 2 interaction with UBE2M N-terminus regions span residues Arg-157 to Ile-161 and Pro-192 to Met-217. An interaction with NEDD8 region spans residues Leu-227 to Pro-229. The active-site Glycyl thioester intermediate is Cys-237. Interaction with NAE1 regions lie at residues Met-242 to His-248 and Tyr-292 to Arg-295. Residues Ile-331–Pro-338 form an interaction with UBE2M N-terminus region. The segment at Tyr-352 to Glu-357 is interaction with NEDD8. An interaction with UBE2M core domain region spans residues Ser-368–Thr-462.

It belongs to the ubiquitin-activating E1 family. UBA3 subfamily. As to quaternary structure, heterodimer of UBA3 and NAE1. Interacts with NEDD8, UBE2F and UBE2M. Binds ESR1 and ESR2 with bound steroid ligand. Interacts with TBATA.

It carries out the reaction ATP + [NEDD8 protein] + [E1 NEDD8-activating enzyme]-L-cysteine = AMP + diphosphate + [E1 NEDD8-activating enzyme]-S-[NEDD8 protein]-yl-L-cysteine.. It functions in the pathway protein modification; protein neddylation. Binding of TP53BP2 to the regulatory subunit NAE1 decreases activity. Functionally, catalytic subunit of the dimeric UBA3-NAE1 E1 enzyme. E1 activates NEDD8 by first adenylating its C-terminal glycine residue with ATP, thereafter linking this residue to the side chain of the catalytic cysteine, yielding a NEDD8-UBA3 thioester and free AMP. E1 finally transfers NEDD8 to the catalytic cysteine of UBE2M. Down-regulates steroid receptor activity. Necessary for cell cycle progression. This is NEDD8-activating enzyme E1 catalytic subunit (Uba3) from Mus musculus (Mouse).